We begin with the raw amino-acid sequence, 189 residues long: MKQMNYIINEENELRFFSIIESLLFASGEPLGLKDISEIIELNTLDTKEILQKMIREYEIEKRGIKLIEIEKKYQLVTKEENSCFIEQLLKTNSSQSLSQAALETLSIVAYKQPVTRVDVDEIRGVKSDRALQTLLQKSLIKETGRLDVPGRPILYSTTEEFLKHFGLESIKELPSLEELLEEFQEEDL.

The protein belongs to the ScpB family. In terms of assembly, homodimer. Homodimerization may be required to stabilize the binding of ScpA to the Smc head domains. Component of a cohesin-like complex composed of ScpA, ScpB and the Smc homodimer, in which ScpA and ScpB bind to the head domain of Smc. The presence of the three proteins is required for the association of the complex with DNA.

Its subcellular location is the cytoplasm. Its function is as follows. Participates in chromosomal partition during cell division. May act via the formation of a condensin-like complex containing Smc and ScpA that pull DNA away from mid-cell into both cell halves. The polypeptide is Segregation and condensation protein B (Clostridium tetani (strain Massachusetts / E88)).